The sequence spans 377 residues: Phosphoserine aminotransferase (377 aa).

Arg-43 serves as a coordination point for L-glutamate. Pyridoxal 5'-phosphate contacts are provided by Trp-105, Thr-164, Asp-189, and Gln-212. Lys-213 is modified (N6-(pyridoxal phosphate)lysine). A pyridoxal 5'-phosphate-binding site is contributed by 254 to 255; the sequence is NT.

It belongs to the class-V pyridoxal-phosphate-dependent aminotransferase family. SerC subfamily. Homodimer. Pyridoxal 5'-phosphate serves as cofactor.

The protein resides in the cytoplasm. The enzyme catalyses O-phospho-L-serine + 2-oxoglutarate = 3-phosphooxypyruvate + L-glutamate. The catalysed reaction is 4-(phosphooxy)-L-threonine + 2-oxoglutarate = (R)-3-hydroxy-2-oxo-4-phosphooxybutanoate + L-glutamate. It functions in the pathway amino-acid biosynthesis; L-serine biosynthesis; L-serine from 3-phospho-D-glycerate: step 2/3. Its pathway is cofactor biosynthesis; pyridoxine 5'-phosphate biosynthesis; pyridoxine 5'-phosphate from D-erythrose 4-phosphate: step 3/5. Its function is as follows. Catalyzes the reversible conversion of 3-phosphohydroxypyruvate to phosphoserine and of 3-hydroxy-2-oxo-4-phosphonooxybutanoate to phosphohydroxythreonine. The polypeptide is Phosphoserine aminotransferase (Bordetella bronchiseptica (strain ATCC BAA-588 / NCTC 13252 / RB50) (Alcaligenes bronchisepticus)).